We begin with the raw amino-acid sequence, 417 residues long: Serine--tRNA ligase (417 aa).

226–228 (TSE) provides a ligand contact to L-serine. ATP is bound by residues 257–259 (RRE) and V273. E280 provides a ligand contact to L-serine. Residue 344–347 (ELTS) coordinates ATP. T379 serves as a coordination point for L-serine.

Belongs to the class-II aminoacyl-tRNA synthetase family. Type-1 seryl-tRNA synthetase subfamily. As to quaternary structure, homodimer. The tRNA molecule binds across the dimer.

It is found in the cytoplasm. It carries out the reaction tRNA(Ser) + L-serine + ATP = L-seryl-tRNA(Ser) + AMP + diphosphate + H(+). The catalysed reaction is tRNA(Sec) + L-serine + ATP = L-seryl-tRNA(Sec) + AMP + diphosphate + H(+). It functions in the pathway aminoacyl-tRNA biosynthesis; selenocysteinyl-tRNA(Sec) biosynthesis; L-seryl-tRNA(Sec) from L-serine and tRNA(Sec): step 1/1. Catalyzes the attachment of serine to tRNA(Ser). Is also able to aminoacylate tRNA(Sec) with serine, to form the misacylated tRNA L-seryl-tRNA(Sec), which will be further converted into selenocysteinyl-tRNA(Sec). In Mycolicibacterium smegmatis (strain ATCC 700084 / mc(2)155) (Mycobacterium smegmatis), this protein is Serine--tRNA ligase.